A 504-amino-acid chain; its full sequence is Occludin (504 aa).

Topologically, residues 1-57 (MFSKKSYDGPPAGYGPPTGYGAPTADYGYGSPPPGSYYVDDAPQLFYKWTSPPGAVR) are cytoplasmic. Residues 51–253 (SPPGAVRGLQ…ICFFAQKTRS (203 aa)) enclose the MARVEL domain. Residues 58–80 (GLQAGVLVLCIAIFACVASTLAW) form a helical membrane-spanning segment. The Extracellular segment spans residues 81–123 (DYGYGLGGAYGTGLGGFYGSNYYGSGLSYSYGYGGYYGGVNQR). Residues 124 to 148 (TANGFMIAMAVLCFLAQLGLLVAAL) traverse the membrane as a helical segment. The Cytoplasmic segment spans residues 149–158 (SKSGATRSRR). The chain crosses the membrane as a helical span at residues 159 to 183 (FYLAVLVLSAVLAFVMLIASIVYIM). The Extracellular portion of the chain corresponds to 184 to 227 (GVNPQAQMSSGYYYSPLLAMCSQAYGSTYLNQYIYHYCTVDPQE). C204 and C221 are disulfide-bonded. A helical membrane pass occupies residues 228–249 (AVAAVCGFLIVILLCLICFFAQ). The Cytoplasmic segment spans residues 250–504 (KTRSKIWRYG…MVSAYDKVRG (255 aa)). The disordered stretch occupies residues 324 to 396 (PSGTYSSRGD…VESSDERDQE (73 aa)). Over residues 361–370 (PARRGRRRRR) the composition is skewed to basic residues. Y379 and Y383 each carry phosphotyrosine. The interaction with TJP1 stretch occupies residues 379–385 (YETDYTT). One can recognise an OCEL domain in the interval 396–504 (EQWASLYPPI…MVSAYDKVRG (109 aa)). Residues 412–471 (QRYKQEFDTDLKRYKQLCAEMDSINDRLNQLSRRLDSITEDSPQYQDVAEEYNQLKDLKR) adopt a coiled-coil conformation.

It belongs to the ELL/occludin family. As to quaternary structure, interacts with TJP1 and TJP3. Post-translationally, phosphorylated. As to expression, localized at tight junctions of both epithelial and endothelial cells. Highly expressed in lung and liver. Expressed at a lower level in brain.

The protein resides in the cell membrane. The protein localises to the cell junction. It is found in the tight junction. Functionally, may play a role in the formation and regulation of the tight junction (TJ) paracellular permeability barrier. Interacts with ZO-1. This chain is Occludin (OCLN), found in Gallus gallus (Chicken).